A 548-amino-acid polypeptide reads, in one-letter code: Putative F-box protein At1g33020 (548 aa).

An F-box domain is found at alanine 4–arginine 53. Residues lysine 380–glycine 404 are disordered. Positions isoleucine 382–proline 392 are enriched in pro residues.

This chain is Putative F-box protein At1g33020, found in Arabidopsis thaliana (Mouse-ear cress).